The following is a 353-amino-acid chain: MKKKWYIVLTMSGYEEKVKENIEKKVEATGIKNLVGRIVIPEEVVLDATSPSERLILSPKAKLHVNNGKDVNKGDLIAEEPPIYARRSGVIVDVKNVRKIVVETIDRKYTKTYYIPESAGIEPGLRVGTKVKQGLPLSKNEEYICELDGKIVEIERMKKVVVQTPDGEQDVYYIPLDVFDRDRIKKGKEVKQGEMLAEARKFFAKVSGRVEVVDYSTRKEIRIYKTKRRKLFPGYVFVEMIMNDEAYNFVRSVPYVMGFVSSGGQPVPVKDREMRPILRLAGLEEYEEKKKPVKVELGFKVGDMVKIISGPFEDFAGVIKEIDPERQELKVNVTIFGRETPVVLHVSEVEKIE.

The region spanning 301 to 335 (VGDMVKIISGPFEDFAGVIKEIDPERQELKVNVTI) is the KOW domain.

The protein belongs to the NusG family.

Its activity is regulated as follows. Regulated by autoinhibition via interaction of the N-terminal and the C-terminal domains. Autoinhibition may prevent NusG from interacting prematurely with other components of the transcription complex or non-specific interactions with other cellular components. In terms of biological role, participates in transcription elongation, termination and antitermination. In Thermotoga maritima (strain ATCC 43589 / DSM 3109 / JCM 10099 / NBRC 100826 / MSB8), this protein is Transcription termination/antitermination protein NusG.